We begin with the raw amino-acid sequence, 197 residues long: Recombination protein RecR (197 aa).

The C4-type zinc finger occupies 57–72 (CSVCFGITEDDPCHLC). Residues 79-174 (TTICVVEEPQ…RVTRLAHGIP (96 aa)) form the Toprim domain.

This sequence belongs to the RecR family.

Functionally, may play a role in DNA repair. It seems to be involved in an RecBC-independent recombinational process of DNA repair. It may act with RecF and RecO. The protein is Recombination protein RecR of Geotalea daltonii (strain DSM 22248 / JCM 15807 / FRC-32) (Geobacter daltonii).